The following is a 607-amino-acid chain: Isocitrate dehydrogenase kinase/phosphatase (607 aa).

Residues 328-334 (APGIKGL) and lysine 349 contribute to the ATP site. The active site involves aspartate 384.

This sequence belongs to the AceK family.

Its subcellular location is the cytoplasm. It catalyses the reaction L-seryl-[isocitrate dehydrogenase] + ATP = O-phospho-L-seryl-[isocitrate dehydrogenase] + ADP + H(+). In terms of biological role, bifunctional enzyme which can phosphorylate or dephosphorylate isocitrate dehydrogenase (IDH) on a specific serine residue. This is a regulatory mechanism which enables bacteria to bypass the Krebs cycle via the glyoxylate shunt in response to the source of carbon. When bacteria are grown on glucose, IDH is fully active and unphosphorylated, but when grown on acetate or ethanol, the activity of IDH declines drastically concomitant with its phosphorylation. This chain is Isocitrate dehydrogenase kinase/phosphatase, found in Cupriavidus metallidurans (strain ATCC 43123 / DSM 2839 / NBRC 102507 / CH34) (Ralstonia metallidurans).